A 319-amino-acid polypeptide reads, in one-letter code: HPr kinase/phosphorylase (319 aa).

Residues His137 and Lys158 contribute to the active site. 152–159 (GDSGVGKS) is an ATP binding site. Mg(2+) is bound at residue Ser159. Asp176 (proton acceptor; for phosphorylation activity. Proton donor; for dephosphorylation activity) is an active-site residue. Residues 201–210 (MEIRGLGIIN) are important for the catalytic mechanism of both phosphorylation and dephosphorylation. Glu202 contributes to the Mg(2+) binding site. The active site involves Arg243. Residues 264 to 269 (PVRPGR) form an important for the catalytic mechanism of dephosphorylation region.

This sequence belongs to the HPrK/P family. As to quaternary structure, homohexamer. Mg(2+) serves as cofactor.

It carries out the reaction [HPr protein]-L-serine + ATP = [HPr protein]-O-phospho-L-serine + ADP + H(+). The catalysed reaction is [HPr protein]-O-phospho-L-serine + phosphate + H(+) = [HPr protein]-L-serine + diphosphate. Functionally, catalyzes the ATP- as well as the pyrophosphate-dependent phosphorylation of a specific serine residue in HPr, a phosphocarrier protein of the phosphoenolpyruvate-dependent sugar phosphotransferase system (PTS). HprK/P also catalyzes the pyrophosphate-producing, inorganic phosphate-dependent dephosphorylation (phosphorolysis) of seryl-phosphorylated HPr (P-Ser-HPr). The sequence is that of HPr kinase/phosphorylase from Treponema pallidum subsp. pallidum (strain SS14).